Reading from the N-terminus, the 252-residue chain is Orotidine 5'-phosphate decarboxylase (252 aa).

Residues D24, K46, 73–82, T137, R199, Q208, G228, and R229 each bind substrate; that span reads DLKFHDIPNT. Catalysis depends on K75, which acts as the Proton donor.

It belongs to the OMP decarboxylase family. Type 1 subfamily. As to quaternary structure, homodimer.

It catalyses the reaction orotidine 5'-phosphate + H(+) = UMP + CO2. It functions in the pathway pyrimidine metabolism; UMP biosynthesis via de novo pathway; UMP from orotate: step 2/2. In terms of biological role, catalyzes the decarboxylation of orotidine 5'-monophosphate (OMP) to uridine 5'-monophosphate (UMP). In Moorella thermoacetica (strain ATCC 39073 / JCM 9320), this protein is Orotidine 5'-phosphate decarboxylase.